Here is a 675-residue protein sequence, read N- to C-terminus: Acyl-coenzyme A oxidase 3, peroxisomal (675 aa).

Residues 1-34 (MSDNRALRRAHVLANHILQSNPPSSNPSLSRELC) constitute a peroxisome transit peptide. 442–457 (AVGGQGVKTENLVGQL) is a binding site for FAD.

Belongs to the acyl-CoA oxidase family. It depends on FAD as a cofactor. As to expression, most abundant in flowers and senescing rosette leaves. Lower expression in hypocotyls, stems, young rosette leaves, cotyledons, cauline leaves and root tip of young seedlings.

It is found in the peroxisome. It catalyses the reaction a 2,3-saturated acyl-CoA + O2 = a (2E)-enoyl-CoA + H2O2. Its pathway is lipid metabolism; peroxisomal fatty acid beta-oxidation. Functionally, catalyzes the desaturation of medium-chain acyl-CoAs to 2-trans-enoyl-CoAs. Active on C8:0- to C14:0-CoA with a maximal activity on C12:0-CoA. The polypeptide is Acyl-coenzyme A oxidase 3, peroxisomal (ACX3) (Arabidopsis thaliana (Mouse-ear cress)).